A 238-amino-acid polypeptide reads, in one-letter code: Nicotinamide/nicotinic acid mononucleotide adenylyltransferase (238 aa).

NAD(+) is bound by residues Ser-29 and Phe-30. ATP contacts are provided by His-37 and Lys-70. Residues Thr-107, Gly-136, Asp-138, Trp-149, Arg-168, and Asn-199 each contribute to the NAD(+) site. ATP is bound at residue 204 to 205 (SR).

It belongs to the eukaryotic NMN adenylyltransferase family. The cofactor is a divalent metal cation.

The protein localises to the nucleus. It catalyses the reaction beta-nicotinamide D-ribonucleotide + ATP + H(+) = diphosphate + NAD(+). The catalysed reaction is nicotinate beta-D-ribonucleotide + ATP + H(+) = deamido-NAD(+) + diphosphate. It participates in cofactor biosynthesis; NAD(+) biosynthesis; deamido-NAD(+) from nicotinate D-ribonucleotide: step 1/1. The protein operates within cofactor biosynthesis; NAD(+) biosynthesis; NAD(+) from nicotinamide D-ribonucleotide: step 1/1. Functionally, catalyzes the formation of NAD(+) from nicotinamide mononucleotide (NMN) and ATP. Can also use the deamidated form; nicotinic acid mononucleotide (NaMN) as substrate. This chain is Nicotinamide/nicotinic acid mononucleotide adenylyltransferase (NMNAT), found in Arabidopsis thaliana (Mouse-ear cress).